A 96-amino-acid polypeptide reads, in one-letter code: MSVKIRLMRLGAKKKPFYRIVVADSRVQRDGKCIEQIGFYNPMVECGAPGFLKVNAERLGYWLGVGAQPTDRVSWFIKKGFIEAQSGSAASTAQEA.

It belongs to the bacterial ribosomal protein bS16 family.

This chain is Small ribosomal subunit protein bS16, found in Anaplasma phagocytophilum (strain HZ).